Consider the following 554-residue polypeptide: Glutamine--tRNA ligase (554 aa).

The 'HIGH' region motif lies at 34–44 (PEPNGYLHIGH). Residues 35–37 (EPN) and 41–47 (HIGHAKS) contribute to the ATP site. L-glutamine-binding residues include aspartate 67 and tyrosine 212. ATP-binding positions include threonine 231, 261–262 (RL), and 269–271 (MSK). The 'KMSKS' region signature appears at 268 to 272 (IMSKR).

This sequence belongs to the class-I aminoacyl-tRNA synthetase family. In terms of assembly, monomer.

It is found in the cytoplasm. It catalyses the reaction tRNA(Gln) + L-glutamine + ATP = L-glutaminyl-tRNA(Gln) + AMP + diphosphate. This chain is Glutamine--tRNA ligase, found in Serratia proteamaculans (strain 568).